The chain runs to 338 residues: Glycerol-3-phosphate dehydrogenase [NAD(P)+] (338 aa).

Serine 14, tyrosine 15, histidine 35, and lysine 109 together coordinate NADPH. Residues lysine 109, glycine 138, and threonine 140 each coordinate sn-glycerol 3-phosphate. Alanine 142 contacts NADPH. The sn-glycerol 3-phosphate site is built by lysine 194, aspartate 247, serine 257, arginine 258, and asparagine 259. Catalysis depends on lysine 194, which acts as the Proton acceptor. Arginine 258 is an NADPH binding site. 2 residues coordinate NADPH: valine 282 and glutamate 284.

The protein belongs to the NAD-dependent glycerol-3-phosphate dehydrogenase family.

Its subcellular location is the cytoplasm. It catalyses the reaction sn-glycerol 3-phosphate + NAD(+) = dihydroxyacetone phosphate + NADH + H(+). The enzyme catalyses sn-glycerol 3-phosphate + NADP(+) = dihydroxyacetone phosphate + NADPH + H(+). It participates in membrane lipid metabolism; glycerophospholipid metabolism. Functionally, catalyzes the reduction of the glycolytic intermediate dihydroxyacetone phosphate (DHAP) to sn-glycerol 3-phosphate (G3P), the key precursor for phospholipid synthesis. This chain is Glycerol-3-phosphate dehydrogenase [NAD(P)+], found in Shewanella baltica (strain OS155 / ATCC BAA-1091).